The sequence spans 255 residues: Urease accessory protein UreD 1 (255 aa).

The protein belongs to the UreD family. In terms of assembly, ureD, UreF and UreG form a complex that acts as a GTP-hydrolysis-dependent molecular chaperone, activating the urease apoprotein by helping to assemble the nickel containing metallocenter of UreC. The UreE protein probably delivers the nickel.

It localises to the cytoplasm. Functionally, required for maturation of urease via the functional incorporation of the urease nickel metallocenter. This chain is Urease accessory protein UreD 1, found in Saccharopolyspora erythraea (strain ATCC 11635 / DSM 40517 / JCM 4748 / NBRC 13426 / NCIMB 8594 / NRRL 2338).